Here is a 200-residue protein sequence, read N- to C-terminus: 3-isopropylmalate dehydratase small subunit (200 aa).

Belongs to the LeuD family. LeuD type 1 subfamily. In terms of assembly, heterodimer of LeuC and LeuD.

It carries out the reaction (2R,3S)-3-isopropylmalate = (2S)-2-isopropylmalate. It functions in the pathway amino-acid biosynthesis; L-leucine biosynthesis; L-leucine from 3-methyl-2-oxobutanoate: step 2/4. Functionally, catalyzes the isomerization between 2-isopropylmalate and 3-isopropylmalate, via the formation of 2-isopropylmaleate. This Vibrio cholerae serotype O1 (strain ATCC 39541 / Classical Ogawa 395 / O395) protein is 3-isopropylmalate dehydratase small subunit.